The sequence spans 976 residues: Ephrin type-A receptor 2 (976 aa).

Positions 1-23 (MELQAARACFALLWGCALAAAAA) are cleaved as a signal peptide. Residues 1 to 206 (MELQAARACF…YYKKCPELLQ (206 aa)) form a mediates interaction with CLDN4 region. Topologically, residues 24 to 537 (AQGKEVVLLD…SPEGSGNLAV (514 aa)) are extracellular. Residues 28-206 (EVVLLDFAAA…YYKKCPELLQ (179 aa)) form the Eph LBD domain. 2 disulfides stabilise this stretch: cysteine 70–cysteine 188 and cysteine 105–cysteine 115. A Fibronectin type-III 1 domain is found at 328-432 (PPSAPHYLTA…TSRSFRTASV (105 aa)). N-linked (GlcNAc...) asparagine glycans are attached at residues asparagine 407 and asparagine 435. The 92-residue stretch at 438-529 (EPPKVRLEGR…KVHEFQTLSP (92 aa)) folds into the Fibronectin type-III 2 domain. The helical transmembrane segment at 538-558 (IGGVAVGVVLLLVLAGVGFFI) threads the bilayer. Over 559 to 976 (HRRRKNQRAR…DQVNTVGIPI (418 aa)) the chain is Cytoplasmic. Phosphoserine is present on serine 570. Tyrosine 575 carries the phosphotyrosine modification. The residue at position 579 (serine 579) is a Phosphoserine. Position 588 is a phosphotyrosine; by autocatalysis (tyrosine 588). Tyrosine 594 carries the post-translational modification Phosphotyrosine. The interval 606 to 906 (TEIHPSCVTR…STSGSEGVPF (301 aa)) is mediates interaction with ARHGEF16 and ELMO2. The Protein kinase domain occupies 613–875 (VTRQKVIGAG…DIVSILDKLI (263 aa)). Residue 619–627 (IGAGEFGEV) coordinates ATP. The residue at position 628 (tyrosine 628) is a Phosphotyrosine. Lysine 646 provides a ligand contact to ATP. Position 647 is a phosphothreonine (threonine 647). Tyrosine 735 is modified (phosphotyrosine; by autocatalysis). The active-site Proton acceptor is aspartate 739. Tyrosine 772 is modified (phosphotyrosine). A phosphoserine mark is found at serine 869 and serine 892. The segment at 886–976 (DFDPRVSIRL…DQVNTVGIPI (91 aa)) is negatively regulates interaction with ARHGEF16. Serine 897 carries the phosphoserine; by PKB/AKT1, RPS6KA1, RPS6KA3 AND PKA modification. The residue at position 901 (serine 901) is a Phosphoserine. The SAM domain maps to 904 to 968 (VPFRTVSEWL…AYSLLGLKDQ (65 aa)). Tyrosine 921 carries the post-translational modification Phosphotyrosine; by autocatalysis. Tyrosine 930 is modified (phosphotyrosine). The short motif at 974 to 976 (IPI) is the PDZ-binding element.

The protein belongs to the protein kinase superfamily. Tyr protein kinase family. Ephrin receptor subfamily. As to quaternary structure, homodimer. Interacts with SLA. Interacts (phosphorylated form) with VAV2, VAV3 and PI3-kinase p85 subunit (PIK3R1, PIK3R2 or PIK3R3); critical for the EFNA1-induced activation of RAC1 which stimulates cell migration. Interacts with INPPL1; regulates activated EPHA2 endocytosis and degradation. Interacts (inactivated form) with PTK2/FAK1 and interacts (EFNA1 ligand-activated form) with PTPN11; regulates integrin-mediated adhesion. Interacts with ARHGEF16, DOCK4 and ELMO2; mediates ligand-independent activation of RAC1 which stimulates cell migration. Interacts with CLDN4; phosphorylates CLDN4 and may regulate tight junctions. Interacts with ACP1. Interacts (via SAM domain) with ANKS1A (via SAM domain). Interacts with CEMIP. Interacts with NCK1; may regulate EPHA2 activity in cell migration and adhesion. Interacts with TIMD4. (Microbial infection) Interacts with human herpes virus 8/HHV-8 glycoprotein L/gL and glycoprotein H/gH heterodimer; this interaction triggers EPHA2 phosphorylation and endocytosis, allowing virus entry. In terms of assembly, (Microbial infection) Interacts with human cytomegalovirus (HCMV) glycoprotein L/gL and glycoprotein H/gH heterodimer. As to quaternary structure, (Microbial infection) Interacts with Epstein-Barr virus/HHV-4 glycoprotein L/gL and glycoprotein H/gH heterodimer; this interaction facilitates virus internalization and fusion. In terms of processing, autophosphorylates. Phosphorylated on tyrosine upon binding and activation by EFNA1. Phosphorylated residues Tyr-588 and Tyr-594 are required for binding VAV2 and VAV3 while phosphorylated residues Tyr-735 and Tyr-930 are required for binding PI3-kinase p85 subunit (PIK3R1, PIK3R2 or PIK3R3). These phosphorylated residues are critical for recruitment of VAV2 and VAV3 and PI3-kinase p85 subunit which transduce downstream signaling to activate RAC1 GTPase and cell migration. Dephosphorylation of Tyr-930 by PTPRF prevents the interaction of EPHA2 with NCK1. Phosphorylated at Ser-897 by PKB; serum-induced phosphorylation which targets EPHA2 to the cell leading edge and stimulates cell migration. Phosphorylation by PKB is inhibited by EFNA1-activated EPHA2 which regulates PKB activity via a reciprocal regulatory loop. Phosphorylated at Ser-897 in response to TNF by RPS6KA1 and RPS6KA3; RPS6KA-EPHA2 signaling pathway controls cell migration. Phosphorylated at Ser-897 by PKA; blocks cell retraction induced by EPHA2 kinase activity. Dephosphorylated by ACP1. Post-translationally, ubiquitinated by CHIP/STUB1. Ubiquitination is regulated by the HSP90 chaperone and regulates the receptor stability and activity through proteasomal degradation. ANKS1A prevents ubiquitination and degradation. As to expression, expressed in brain and glioma tissue and glioma cell lines (at protein level). Expressed most highly in tissues that contain a high proportion of epithelial cells, e.g. skin, intestine, lung, and ovary.

Its subcellular location is the cell membrane. The protein localises to the cell projection. The protein resides in the ruffle membrane. It is found in the lamellipodium membrane. It localises to the cell junction. Its subcellular location is the focal adhesion. It carries out the reaction L-tyrosyl-[protein] + ATP = O-phospho-L-tyrosyl-[protein] + ADP + H(+). Its function is as follows. Receptor tyrosine kinase which binds promiscuously membrane-bound ephrin-A family ligands residing on adjacent cells, leading to contact-dependent bidirectional signaling into neighboring cells. The signaling pathway downstream of the receptor is referred to as forward signaling while the signaling pathway downstream of the ephrin ligand is referred to as reverse signaling. Activated by the ligand ephrin-A1/EFNA1 regulates migration, integrin-mediated adhesion, proliferation and differentiation of cells. Regulates cell adhesion and differentiation through DSG1/desmoglein-1 and inhibition of the ERK1/ERK2 (MAPK3/MAPK1, respectively) signaling pathway. May also participate in UV radiation-induced apoptosis and have a ligand-independent stimulatory effect on chemotactic cell migration. During development, may function in distinctive aspects of pattern formation and subsequently in development of several fetal tissues. Involved for instance in angiogenesis, in early hindbrain development and epithelial proliferation and branching morphogenesis during mammary gland development. Engaged by the ligand ephrin-A5/EFNA5 may regulate lens fiber cells shape and interactions and be important for lens transparency development and maintenance. With ephrin-A2/EFNA2 may play a role in bone remodeling through regulation of osteoclastogenesis and osteoblastogenesis. (Microbial infection) Acts as a receptor for hepatitis C virus (HCV) in hepatocytes and facilitates its cell entry. Mediates HCV entry by promoting the formation of the CD81-CLDN1 receptor complexes that are essential for HCV entry and by enhancing membrane fusion of cells expressing HCV envelope glycoproteins. Functionally, acts as a receptor for human cytomegalovirus (HCMV) to mediate viral entry and fusion in glioblastoma cells. The sequence is that of Ephrin type-A receptor 2 (EPHA2) from Homo sapiens (Human).